The following is a 118-amino-acid chain: Ribonuclease P protein component (118 aa).

Belongs to the RnpA family. As to quaternary structure, consists of a catalytic RNA component (M1 or rnpB) and a protein subunit.

It carries out the reaction Endonucleolytic cleavage of RNA, removing 5'-extranucleotides from tRNA precursor.. Functionally, RNaseP catalyzes the removal of the 5'-leader sequence from pre-tRNA to produce the mature 5'-terminus. It can also cleave other RNA substrates such as 4.5S RNA. The protein component plays an auxiliary but essential role in vivo by binding to the 5'-leader sequence and broadening the substrate specificity of the ribozyme. The protein is Ribonuclease P protein component of Vibrio parahaemolyticus serotype O3:K6 (strain RIMD 2210633).